The following is a 144-amino-acid chain: Large ribosomal subunit protein uL15 (144 aa).

Residues 1–52 form a disordered region; the sequence is MKLHTLKSTPGARVEKHRVGRGHAAGKGKQAGKGQSGQNKRHGHRLGFEGGQ. Residues 15–26 are compositionally biased toward basic residues; it reads EKHRVGRGHAAG.

The protein belongs to the universal ribosomal protein uL15 family. Part of the 50S ribosomal subunit.

In terms of biological role, binds to the 23S rRNA. The chain is Large ribosomal subunit protein uL15 from Mycoplasmopsis agalactiae (strain NCTC 10123 / CIP 59.7 / PG2) (Mycoplasma agalactiae).